A 963-amino-acid polypeptide reads, in one-letter code: Iron-responsive element-binding protein 2 (963 aa).

[4Fe-4S] cluster contacts are provided by C512, C578, and C581.

The protein belongs to the aconitase/IPM isomerase family. Interacts with RBCK1 only in iron-rich conditions. Interacts (when associated with the 4Fe-4S) with FBXL5. Interacts with CIAO1 and CIAO2A. The cofactor is [4Fe-4S] cluster. In terms of processing, ubiquitinated and degraded by the proteasome in presence of high level of iron and oxygen. Ubiquitinated by a SCF complex containing FBXL5. Upon iron and oxygen depletion FBXL5 is degraded, preventing ubiquitination and allowing its RNA-binding activity. As to expression, ubiquitously expressed in rat tissues, the highest amounts present in skeletal muscle and heart.

The protein localises to the cytoplasm. Its function is as follows. RNA-binding protein that binds to iron-responsive elements (IRES), which are stem-loop structures found in the 5'-UTR of ferritin, and delta aminolevulinic acid synthase mRNAs, and in the 3'-UTR of transferrin receptor mRNA. Binding to the IRE element in ferritin results in the repression of its mRNA translation. Binding of the protein to the transferrin receptor mRNA inhibits the degradation of this otherwise rapidly degraded mRNA. The sequence is that of Iron-responsive element-binding protein 2 (Ireb2) from Rattus norvegicus (Rat).